Here is a 726-residue protein sequence, read N- to C-terminus: Transferrin (726 aa).

The N-terminal stretch at 1–16 (MLLCLTLLFSASAVLA) is a signal peptide. Transferrin-like domains follow at residues 29–367 (YKVC…ERDT) and 374–719 (VRFC…VIRA). Intrachain disulfides connect Cys32–Cys63 and Cys41–Cys54. Residues Asp78 and Tyr111 each contribute to the Fe(3+) site. 4 disulfides stabilise this stretch: Cys135/Cys231, Cys184/Cys210, Cys207/Cys216, and Cys274/Cys287. Thr137, Arg141, Val143, and Gly144 together coordinate hydrogencarbonate. The N-linked (GlcNAc...) asparagine glycan is linked to Asn162. Tyr225 serves as a coordination point for Fe(3+). Asn337 and Asn358 each carry an N-linked (GlcNAc...) asparagine glycan. Intrachain disulfides connect Cys377–Cys414 and Cys387–Cys405. Fe(3+)-binding residues include Asp429 and Tyr457. A disulfide bridge links Cys481 with Cys562. Residues Thr483, Arg487, Ala489, and Gly490 each contribute to the hydrogencarbonate site. Residues Tyr573 and His642 each contribute to the Fe(3+) site.

Belongs to the transferrin family.

It is found in the secreted. In terms of biological role, transferrins are iron binding transport proteins which bind Fe(3+) ion in association with the binding of an anion, usually bicarbonate. This Blaberus discoidalis (Tropical cockroach) protein is Transferrin.